A 334-amino-acid chain; its full sequence is Methylthioribose-1-phosphate isomerase (334 aa).

Substrate contacts are provided by residues Arg-44–Ala-46, Arg-87, and Gln-192. The Proton donor role is filled by Asp-233. Asn-243 to Lys-244 contacts substrate.

The protein belongs to the eIF-2B alpha/beta/delta subunits family. MtnA subfamily.

It carries out the reaction 5-(methylsulfanyl)-alpha-D-ribose 1-phosphate = 5-(methylsulfanyl)-D-ribulose 1-phosphate. The protein operates within amino-acid biosynthesis; L-methionine biosynthesis via salvage pathway; L-methionine from S-methyl-5-thio-alpha-D-ribose 1-phosphate: step 1/6. Its function is as follows. Catalyzes the interconversion of methylthioribose-1-phosphate (MTR-1-P) into methylthioribulose-1-phosphate (MTRu-1-P). The protein is Methylthioribose-1-phosphate isomerase of Dehalococcoides mccartyi (strain ATCC BAA-2266 / KCTC 15142 / 195) (Dehalococcoides ethenogenes (strain 195)).